The chain runs to 291 residues: Pyridoxal 5'-phosphate synthase subunit PdxS (291 aa).

A D-ribose 5-phosphate-binding site is contributed by Asp-23. Lys-80 (schiff-base intermediate with D-ribose 5-phosphate) is an active-site residue. D-ribose 5-phosphate is bound at residue Gly-152. Arg-164 serves as a coordination point for D-glyceraldehyde 3-phosphate. Residues Gly-213 and 234–235 (GS) each bind D-ribose 5-phosphate.

The protein belongs to the PdxS/SNZ family. As to quaternary structure, in the presence of PdxT, forms a dodecamer of heterodimers.

It carries out the reaction aldehydo-D-ribose 5-phosphate + D-glyceraldehyde 3-phosphate + L-glutamine = pyridoxal 5'-phosphate + L-glutamate + phosphate + 3 H2O + H(+). Its pathway is cofactor biosynthesis; pyridoxal 5'-phosphate biosynthesis. Functionally, catalyzes the formation of pyridoxal 5'-phosphate from ribose 5-phosphate (RBP), glyceraldehyde 3-phosphate (G3P) and ammonia. The ammonia is provided by the PdxT subunit. Can also use ribulose 5-phosphate and dihydroxyacetone phosphate as substrates, resulting from enzyme-catalyzed isomerization of RBP and G3P, respectively. This is Pyridoxal 5'-phosphate synthase subunit PdxS from Haemophilus influenzae (strain ATCC 51907 / DSM 11121 / KW20 / Rd).